The sequence spans 344 residues: N-acetyl-gamma-glutamyl-phosphate reductase (344 aa).

Cys150 is an active-site residue.

The protein belongs to the NAGSA dehydrogenase family. Type 1 subfamily.

It localises to the cytoplasm. The catalysed reaction is N-acetyl-L-glutamate 5-semialdehyde + phosphate + NADP(+) = N-acetyl-L-glutamyl 5-phosphate + NADPH + H(+). Its pathway is amino-acid biosynthesis; L-arginine biosynthesis; N(2)-acetyl-L-ornithine from L-glutamate: step 3/4. Its function is as follows. Catalyzes the NADPH-dependent reduction of N-acetyl-5-glutamyl phosphate to yield N-acetyl-L-glutamate 5-semialdehyde. The sequence is that of N-acetyl-gamma-glutamyl-phosphate reductase from Pseudomonas fluorescens (strain SBW25).